A 504-amino-acid polypeptide reads, in one-letter code: Glycerol kinase (504 aa).

Threonine 12 provides a ligand contact to ADP. ATP is bound by residues threonine 12, threonine 13, and serine 14. Threonine 12 lines the sn-glycerol 3-phosphate pocket. Arginine 16 is a binding site for ADP. 4 residues coordinate sn-glycerol 3-phosphate: arginine 82, glutamate 83, tyrosine 134, and aspartate 246. Glycerol-binding residues include arginine 82, glutamate 83, tyrosine 134, aspartate 246, and glutamine 247. Positions 268 and 312 each coordinate ADP. ATP contacts are provided by threonine 268, glycine 312, glutamine 316, and glycine 413. Residues glycine 413 and asparagine 417 each contribute to the ADP site.

Belongs to the FGGY kinase family.

It carries out the reaction glycerol + ATP = sn-glycerol 3-phosphate + ADP + H(+). It functions in the pathway polyol metabolism; glycerol degradation via glycerol kinase pathway; sn-glycerol 3-phosphate from glycerol: step 1/1. Inhibited by fructose 1,6-bisphosphate (FBP). Its function is as follows. Key enzyme in the regulation of glycerol uptake and metabolism. Catalyzes the phosphorylation of glycerol to yield sn-glycerol 3-phosphate. This Pseudarthrobacter chlorophenolicus (strain ATCC 700700 / DSM 12829 / CIP 107037 / JCM 12360 / KCTC 9906 / NCIMB 13794 / A6) (Arthrobacter chlorophenolicus) protein is Glycerol kinase.